We begin with the raw amino-acid sequence, 231 residues long: MPRYYCDYCDTYLTHDSPSVRKQHNAGYKHKANVRTYYQQFEEQQTQSLIDQRIKEHLGQAAAFQAGAPFNQHMLTFPGAVARPRLPILPTPGMPHGFPQAPGAPLMPGVRPPILPAPGIPGYPGGPPTMLQPGAPPGSMPQPGAPPGSMPQPGAPPGSMPMQMAPLPRPPTLPPPTSGVPGAPIPNSAAPPAIYQTNPPAPAGPTSGAPPAPPTAPQPAFSYAQPSEGNH.

The Matrin-type zinc finger occupies 4–36 (YYCDYCDTYLTHDSPSVRKQHNAGYKHKANVRT). Pro residues-rich tracts occupy residues 117–127 (APGIPGYPGGP), 134–159 (GAPP…PPGS), and 167–178 (LPRPPTLPPPTS). The segment at 117–231 (APGIPGYPGG…SYAQPSEGNH (115 aa)) is disordered. Low complexity predominate over residues 181-193 (PGAPIPNSAAPPA). Residues 199-217 (PPAPAGPTSGAPPAPPTAP) are compositionally biased toward pro residues.

Belongs to the U1 small nuclear ribonucleoprotein C family. U1 snRNP is composed of the 7 core Sm proteins B/B', D1, D2, D3, E, F and G that assemble in a heptameric protein ring on the Sm site of the small nuclear RNA to form the core snRNP, and at least 3 U1 snRNP-specific proteins U1-70K, U1-A and U1-C. U1-C interacts with U1 snRNA and the 5' splice-site region of the pre-mRNA.

It is found in the nucleus. In terms of biological role, component of the spliceosomal U1 snRNP, which is essential for recognition of the pre-mRNA 5' splice-site and the subsequent assembly of the spliceosome. U1-C is directly involved in initial 5' splice-site recognition for both constitutive and regulated alternative splicing. The interaction with the 5' splice-site seems to precede base-pairing between the pre-mRNA and the U1 snRNA. Stimulates commitment or early (E) complex formation by stabilizing the base pairing of the 5' end of the U1 snRNA and the 5' splice-site region. This is U1 small nuclear ribonucleoprotein C-1 from Sorghum bicolor (Sorghum).